We begin with the raw amino-acid sequence, 267 residues long: Centromere protein Q (267 aa).

Composition is skewed to basic residues over residues 1–22 (MSGK…LKQR) and 39–49 (KRNRSHAKHLS). Positions 1–54 (MSGKARASRKKPQQVKRSLKQRANKEADLPENEVGNTAKRNRSHAKHLSSKVTG) are disordered. S49 is subject to Phosphoserine. Residues 100–202 (IKRKEEIQCH…EEQEVKQVFH (103 aa)) are a coiled coil.

The protein belongs to the CENP-Q/OKP1 family. In terms of assembly, component of the CENPA-CAD complex, composed of CENPI, CENPK, CENPL, CENPO, CENPP, CENPQ, CENPR and CENPS. The CENPA-CAD complex interacts with the CENPA-NAC complex, at least composed of CENPA, CENPC, CENPH, CENPM, CENPN, CENPT and CENPU. Phosphorylation at Ser-49 is essential for CENPE recruitment to kinetochores and orderly chromosome congression.

Its subcellular location is the nucleus. It localises to the chromosome. The protein resides in the centromere. Component of the CENPA-CAD (nucleosome distal) complex, a complex recruited to centromeres which is involved in assembly of kinetochore proteins, mitotic progression and chromosome segregation. May be involved in incorporation of newly synthesized CENPA into centromeres via its interaction with the CENPA-NAC complex. Plays an important role in chromosome congression and in the recruitment of CENP-O complex (which comprises CENPO, CENPP, CENPQ and CENPU), CENPE and PLK1 to the kinetochores. The chain is Centromere protein Q (Cenpq) from Mus musculus (Mouse).